Here is a 255-residue protein sequence, read N- to C-terminus: Thiazole synthase (255 aa).

Catalysis depends on Lys95, which acts as the Schiff-base intermediate with DXP. 1-deoxy-D-xylulose 5-phosphate is bound by residues Gly156, 182-183 (AG), and 204-205 (NT).

This sequence belongs to the ThiG family. Homotetramer. Forms heterodimers with either ThiH or ThiS.

It is found in the cytoplasm. The catalysed reaction is [ThiS sulfur-carrier protein]-C-terminal-Gly-aminoethanethioate + 2-iminoacetate + 1-deoxy-D-xylulose 5-phosphate = [ThiS sulfur-carrier protein]-C-terminal Gly-Gly + 2-[(2R,5Z)-2-carboxy-4-methylthiazol-5(2H)-ylidene]ethyl phosphate + 2 H2O + H(+). Its pathway is cofactor biosynthesis; thiamine diphosphate biosynthesis. Functionally, catalyzes the rearrangement of 1-deoxy-D-xylulose 5-phosphate (DXP) to produce the thiazole phosphate moiety of thiamine. Sulfur is provided by the thiocarboxylate moiety of the carrier protein ThiS. In vitro, sulfur can be provided by H(2)S. In Vibrio campbellii (strain ATCC BAA-1116), this protein is Thiazole synthase.